The primary structure comprises 148 residues: Putative nickel-responsive regulator (148 aa).

Residues histidine 88, histidine 99, histidine 101, and cysteine 107 each contribute to the Ni(2+) site.

This sequence belongs to the transcriptional regulatory CopG/NikR family. The cofactor is Ni(2+).

In terms of biological role, transcriptional regulator. This Helicobacter pylori (strain Shi470) protein is Putative nickel-responsive regulator.